A 311-amino-acid chain; its full sequence is Oxygen-dependent coproporphyrinogen-III oxidase (311 aa).

Ser-93 is a substrate binding site. Positions 97 and 107 each coordinate a divalent metal cation. His-107 acts as the Proton donor in catalysis. A substrate-binding site is contributed by 109–111 (NVR). 2 residues coordinate a divalent metal cation: His-153 and His-184. The important for dimerization stretch occupies residues 252-287 (YVEFNLVFDRGTLFGLQSGGRTESILMSLPPVVKWR). A substrate-binding site is contributed by 270–272 (GGR).

It belongs to the aerobic coproporphyrinogen-III oxidase family. In terms of assembly, homodimer. Requires a divalent metal cation as cofactor.

It is found in the cytoplasm. It carries out the reaction coproporphyrinogen III + O2 + 2 H(+) = protoporphyrinogen IX + 2 CO2 + 2 H2O. It participates in porphyrin-containing compound metabolism; protoporphyrin-IX biosynthesis; protoporphyrinogen-IX from coproporphyrinogen-III (O2 route): step 1/1. Involved in the heme biosynthesis. Catalyzes the aerobic oxidative decarboxylation of propionate groups of rings A and B of coproporphyrinogen-III to yield the vinyl groups in protoporphyrinogen-IX. The chain is Oxygen-dependent coproporphyrinogen-III oxidase from Aromatoleum aromaticum (strain DSM 19018 / LMG 30748 / EbN1) (Azoarcus sp. (strain EbN1)).